A 658-amino-acid polypeptide reads, in one-letter code: Threonine--tRNA ligase (658 aa).

The TGS domain occupies Met1–Thr61. The segment at Asp259 to Pro554 is catalytic. Residues Cys353, His404, and His531 each contribute to the Zn(2+) site.

Belongs to the class-II aminoacyl-tRNA synthetase family. As to quaternary structure, homodimer. The cofactor is Zn(2+).

Its subcellular location is the cytoplasm. It catalyses the reaction tRNA(Thr) + L-threonine + ATP = L-threonyl-tRNA(Thr) + AMP + diphosphate + H(+). Its function is as follows. Catalyzes the attachment of threonine to tRNA(Thr) in a two-step reaction: L-threonine is first activated by ATP to form Thr-AMP and then transferred to the acceptor end of tRNA(Thr). Also edits incorrectly charged L-seryl-tRNA(Thr). The protein is Threonine--tRNA ligase of Parafrankia sp. (strain EAN1pec).